A 305-amino-acid polypeptide reads, in one-letter code: Putative lipid kinase SAB0675c (305 aa).

The region spanning 3–139 (NKYTHGVLFY…YDVIKINNQY (137 aa)) is the DAGKc domain. ATP is bound by residues Ser44, 74–80 (GDGTVNE), and Thr101. Residues Ser220, Asp223, and Glu225 each coordinate Mg(2+). Glu281 acts as the Proton acceptor in catalysis.

This sequence belongs to the diacylglycerol/lipid kinase family. Mg(2+) is required as a cofactor.

Its function is as follows. May catalyze the ATP-dependent phosphorylation of lipids other than diacylglycerol (DAG). This chain is Putative lipid kinase SAB0675c, found in Staphylococcus aureus (strain bovine RF122 / ET3-1).